A 1032-amino-acid polypeptide reads, in one-letter code: Vacuolar membrane protease (1032 aa).

Residues 1-11 lie on the Cytoplasmic side of the membrane; it reads MRFQNPFAFRP. The chain crosses the membrane as a helical span at residues 12–32; that stretch reads GPVSFWTTVIYLALVIPLIYV. Residues 33–426 lie on the Vacuolar side of the membrane; that stretch reads HETVPPAPSD…AWAVFALRGL (394 aa). N-linked (GlcNAc...) asparagine glycans are attached at residues Asn50 and Asn142. Residues His207 and Asp219 each coordinate Zn(2+). The Proton acceptor role is filled by Glu253. Zn(2+) contacts are provided by Glu254, Glu279, and His352. A helical membrane pass occupies residues 427 to 447; it reads FAWSLTLLVATPLILVAITYI. Over 448-482 the chain is Cytoplasmic; sequence LARKDKYYFFSRDIKMHHDINDDPVVLGGWKGFLR. Residues 483-503 traverse the membrane as a helical segment; the sequence is FPFALVFAGALTIASTLLLAK. The Vacuolar segment spans residues 504-511; sequence FNPLIIYS. Residues 512–532 form a helical membrane-spanning segment; the sequence is SPYAVWSMTLSIFYFSFWLIM. Topologically, residues 533–545 are cytoplasmic; that stretch reads RGASFIRPSALHR. The helical transmembrane segment at 546–566 threads the bilayer; the sequence is GYVLIWLFALGWGLQVVGAVA. The Vacuolar segment spans residues 567–573; that stretch reads EDRLHIA. A helical membrane pass occupies residues 574-594; the sequence is ALYATVFLQSAVFLALFISLL. Topologically, residues 595 to 708 are cytoplasmic; it reads EQFALLGKHD…WSGRLPSWTW (114 aa). The span at 616–631 shows a compositional bias: basic and acidic residues; the sequence is RDISSHGTDHESRPQP. The disordered stretch occupies residues 616-666; sequence RDISSHGTDHESRPQPEEEPAQPEGDEDESEDATETTPLRANEPGYGSSTR. Over residues 632–649 the composition is skewed to acidic residues; sequence EEEPAQPEGDEDESEDAT. Residues 709–729 form a helical membrane-spanning segment; that stretch reads IIQFLLLAPVPVILFGNLGLV. Over 730–745 the chain is Vacuolar; that stretch reads AMSALQMTGTDGGSLL. Residues 746-766 traverse the membrane as a helical segment; it reads VPVLTLGIVSIFLLLPLTPFI. Residues 767-773 lie on the Cytoplasmic side of the membrane; that stretch reads HRVSHHV. A helical transmembrane segment spans residues 774 to 794; sequence PMFLLCVFAGTFIYNLVAFPF. Residues 795 to 1032 lie on the Vacuolar side of the membrane; sequence SDSHRFKFYF…LVEVRKTYKV (238 aa). N-linked (GlcNAc...) asparagine glycans are attached at residues Asn812 and Asn884.

The protein belongs to the peptidase M28 family. It depends on Zn(2+) as a cofactor.

It is found in the vacuole membrane. May be involved in vacuolar sorting and osmoregulation. This is Vacuolar membrane protease from Fusarium vanettenii (strain ATCC MYA-4622 / CBS 123669 / FGSC 9596 / NRRL 45880 / 77-13-4) (Fusarium solani subsp. pisi).